The sequence spans 320 residues: ATP-dependent 6-phosphofructokinase (320 aa).

Gly-12 lines the ATP pocket. Residues 22–26 (RGVVR) and 55–60 (RYSVSD) each bind ADP. ATP is bound by residues 73–74 (RF) and 103–106 (GDGS). Residue Asp-104 coordinates Mg(2+). 126 to 128 (TID) is a binding site for substrate. Asp-128 serves as the catalytic Proton acceptor. Arg-155 provides a ligand contact to ADP. Substrate is bound by residues Arg-163 and 170–172 (MGR). ADP-binding positions include 186 to 188 (GCE), Lys-212, and 214 to 216 (KKH). Residues Glu-223, Arg-244, and 250-253 (HIQR) contribute to the substrate site.

It belongs to the phosphofructokinase type A (PFKA) family. ATP-dependent PFK group I subfamily. Prokaryotic clade 'B1' sub-subfamily. In terms of assembly, homotetramer. Mg(2+) is required as a cofactor.

Its subcellular location is the cytoplasm. The catalysed reaction is beta-D-fructose 6-phosphate + ATP = beta-D-fructose 1,6-bisphosphate + ADP + H(+). The protein operates within carbohydrate degradation; glycolysis; D-glyceraldehyde 3-phosphate and glycerone phosphate from D-glucose: step 3/4. With respect to regulation, allosterically activated by ADP and other diphosphonucleosides, and allosterically inhibited by phosphoenolpyruvate. Functionally, catalyzes the phosphorylation of D-fructose 6-phosphate to fructose 1,6-bisphosphate by ATP, the first committing step of glycolysis. The sequence is that of ATP-dependent 6-phosphofructokinase from Salmonella gallinarum (strain 287/91 / NCTC 13346).